Reading from the N-terminus, the 556-residue chain is Endonuclease/exonuclease/phosphatase family domain-containing protein 1 (556 aa).

A HhH domain is found at 39–68 (ERLNINTATEEELMTLPGVTRQVAQNIVEY).

This Xenopus laevis (African clawed frog) protein is Endonuclease/exonuclease/phosphatase family domain-containing protein 1 (eepd1).